A 596-amino-acid polypeptide reads, in one-letter code: Chaperone protein DnaK (596 aa).

Thr174 bears the Phosphothreonine; by autocatalysis mark. The segment at 576 to 596 (ANATKDQSSKDQEEVATVVEE) is disordered.

It belongs to the heat shock protein 70 family.

Acts as a chaperone. The polypeptide is Chaperone protein DnaK (Mycoplasmopsis synoviae (strain 53) (Mycoplasma synoviae)).